We begin with the raw amino-acid sequence, 298 residues long: Nitrogenase iron protein (298 aa).

ATP is bound at residue 13-20 (GKGGIGKS). Residue cysteine 101 participates in [4Fe-4S] cluster binding. Residue arginine 104 is modified to ADP-ribosylarginine; by dinitrogenase reductase ADP-ribosyltransferase. Cysteine 135 contacts [4Fe-4S] cluster.

This sequence belongs to the NifH/BchL/ChlL family. In terms of assembly, homodimer. [4Fe-4S] cluster is required as a cofactor. The reversible ADP-ribosylation of Arg-104 inactivates the nitrogenase reductase and regulates nitrogenase activity.

The catalysed reaction is N2 + 8 reduced [2Fe-2S]-[ferredoxin] + 16 ATP + 16 H2O = H2 + 8 oxidized [2Fe-2S]-[ferredoxin] + 2 NH4(+) + 16 ADP + 16 phosphate + 6 H(+). Functionally, the key enzymatic reactions in nitrogen fixation are catalyzed by the nitrogenase complex, which has 2 components: the iron protein and the molybdenum-iron protein. This is Nitrogenase iron protein from Cyanothece sp. (strain PCC 7425 / ATCC 29141).